Consider the following 250-residue polypeptide: 2,3-bisphosphoglycerate-dependent phosphoglycerate mutase (250 aa).

Residues Arg10 to Asn17, Thr23 to Gly24, Arg62, Glu89 to Tyr92, Lys100, Arg116 to Arg117, and Gly185 to Asn186 contribute to the substrate site. The active-site Tele-phosphohistidine intermediate is His11. The active-site Proton donor/acceptor is the Glu89.

Belongs to the phosphoglycerate mutase family. BPG-dependent PGAM subfamily. In terms of assembly, homodimer.

It carries out the reaction (2R)-2-phosphoglycerate = (2R)-3-phosphoglycerate. The protein operates within carbohydrate degradation; glycolysis; pyruvate from D-glyceraldehyde 3-phosphate: step 3/5. Functionally, catalyzes the interconversion of 2-phosphoglycerate and 3-phosphoglycerate. The protein is 2,3-bisphosphoglycerate-dependent phosphoglycerate mutase of Yersinia enterocolitica serotype O:8 / biotype 1B (strain NCTC 13174 / 8081).